We begin with the raw amino-acid sequence, 446 residues long: Histidine--tRNA ligase (446 aa).

The interval 403-422 is disordered; it reads TASVKPLRGTGDDGEKSVQQ.

The protein belongs to the class-II aminoacyl-tRNA synthetase family. Homodimer.

It is found in the cytoplasm. The catalysed reaction is tRNA(His) + L-histidine + ATP = L-histidyl-tRNA(His) + AMP + diphosphate + H(+). The polypeptide is Histidine--tRNA ligase (Burkholderia thailandensis (strain ATCC 700388 / DSM 13276 / CCUG 48851 / CIP 106301 / E264)).